A 369-amino-acid polypeptide reads, in one-letter code: Anhydro-N-acetylmuramic acid kinase (369 aa).

ATP is bound at residue 12–19; it reads GTSLDGVD.

The protein belongs to the anhydro-N-acetylmuramic acid kinase family.

It catalyses the reaction 1,6-anhydro-N-acetyl-beta-muramate + ATP + H2O = N-acetyl-D-muramate 6-phosphate + ADP + H(+). Its pathway is amino-sugar metabolism; 1,6-anhydro-N-acetylmuramate degradation. The protein operates within cell wall biogenesis; peptidoglycan recycling. Functionally, catalyzes the specific phosphorylation of 1,6-anhydro-N-acetylmuramic acid (anhMurNAc) with the simultaneous cleavage of the 1,6-anhydro ring, generating MurNAc-6-P. Is required for the utilization of anhMurNAc either imported from the medium or derived from its own cell wall murein, and thus plays a role in cell wall recycling. This is Anhydro-N-acetylmuramic acid kinase from Actinobacillus pleuropneumoniae serotype 7 (strain AP76).